The primary structure comprises 330 residues: tRNA U34 carboxymethyltransferase (330 aa).

Residues lysine 91, tryptophan 105, lysine 110, glycine 130, aspartate 152–serine 154, isoleucine 181–glutamate 182, methionine 196, tyrosine 200, and arginine 315 contribute to the carboxy-S-adenosyl-L-methionine site.

This sequence belongs to the class I-like SAM-binding methyltransferase superfamily. CmoB family. As to quaternary structure, homotetramer.

It catalyses the reaction carboxy-S-adenosyl-L-methionine + 5-hydroxyuridine(34) in tRNA = 5-carboxymethoxyuridine(34) in tRNA + S-adenosyl-L-homocysteine + H(+). Catalyzes carboxymethyl transfer from carboxy-S-adenosyl-L-methionine (Cx-SAM) to 5-hydroxyuridine (ho5U) to form 5-carboxymethoxyuridine (cmo5U) at position 34 in tRNAs. This is tRNA U34 carboxymethyltransferase from Shewanella sp. (strain ANA-3).